Consider the following 985-residue polypeptide: MSECGGRGGGSSSSEDAEDEGGGGGGPAGSDCLSSSPTLATASSAGRLRRGLRGAFLMARQRPELLCGAVALGCALLLALKFTCSRAKDVIIPAKPPVSFFSLRSPVLDLFQGQLDYAEYVRRDSEVVLLFFYAPWCGQSIAARAEIEQAASRLSDQVLFVAINCWWNQGKCRKQKHFFYFPVIYLYHRSFGPIEYKGPMSAVYIEKFVRRVMKPLLYIPSQSELLDFLSNYEPGVLGYFEFSGSPQPPGYLTFFTSALHSLKKALESTSSPRALVSFTGEWHLETKIYVLDYLGTVRFGVITNKHLAKLVSLVHSGSVYLHRHFNTSLVFPREVLNYTAENICKWALENQETLFRWLRPHGGKSLLLNNELKKGPALFLFIPFNPLAESHPLIDEITEVALEYNNCHGDQVVERLLQHLRRVDAPVLESLALEVPAQLPDPPTITASPCCNTVVLPQWHSFSRTHNVCELCVNQTSGGMKPSSVSVPQCSFFEMAAALDSFYLKEQTFYHVASDSIECSNFLTSYSPFSYYTACCRTISRGVSGFIDSEQGVFEAPTVAFSSLEKKCEVDAPSSVPHIEENRYLFPEVDMTSTNFTGLSCRTNKTLNIYLLDSNLFWLYAERLGAPSSTQVKEFAAIVDVKEESHYILDPKQALMKLTLESFIQNFSVLYSPLKRHLIGSGSAQFPSQHLITEVTTDTFWEVVLQKQDVLLLYYAPWCGFCPSLNHIFIQLARNLPMDTFTVARIDVSQNDLPWEFMVDRLPTVLFFPCNRKDLSVKYPEDVPITLPNLLRFILHHSDPASSPQNVANSPTKECLQSEAVLQRGHISHLEREIQKLRAEISSLQRAQVQVESQLSSARRDEHRLRQQQRALEEQHSLLHAHSEQLQALYEQKTRELQELARKLQELADASENLLTENTWLKILVATMERKLEGRDGAESLAAQREVHPKQPEPSATPQLPGSSPPPANVSATLVSERNKENRTD.

The span at 1-11 (MSECGGRGGGS) shows a compositional bias: gly residues. A disordered region spans residues 1-38 (MSECGGRGGGSSSSEDAEDEGGGGGGPAGSDCLSSSPT). Residues 29–38 (GSDCLSSSPT) are compositionally biased toward low complexity. A helical transmembrane segment spans residues 65–85 (LLCGAVALGCALLLALKFTCS). The region spanning 92-214 (IPAKPPVSFF…IEKFVRRVMK (123 aa)) is the Thioredoxin 1 domain. Cystine bridges form between cysteine 469–cysteine 472 and cysteine 719–cysteine 722. One can recognise a Thioredoxin 2 domain in the interval 649–799 (LDPKQALMKL…LLRFILHHSD (151 aa)). A coiled-coil region spans residues 821–919 (VLQRGHISHL…ASENLLTENT (99 aa)). A Phosphoserine modification is found at serine 828. Positions 935-985 (RDGAESLAAQREVHPKQPEPSATPQLPGSSPPPANVSATLVSERNKENRTD) are disordered.

This sequence belongs to the protein disulfide isomerase family. Interacts with the cytoplasmic part of DUOX1 and DUOX2. Interacts with TPO and CYBA. As to expression, widely expressed at low level. Expressed at higher level in thyroid and prostate.

The protein localises to the endoplasmic reticulum membrane. In terms of biological role, may act as a redox regulator involved in DUOX proteins folding. The interaction with DUOX1 and DUOX2 suggest that it belongs to a multiprotein complex constituting the thyroid H(2)O(2) generating system. It is however not sufficient to assist DUOX1 and DUOX2 in H(2)O(2) generation. This chain is Thioredoxin domain-containing protein 11 (TXNDC11), found in Homo sapiens (Human).